A 366-amino-acid polypeptide reads, in one-letter code: 3-dehydroquinate synthase (366 aa).

NAD(+) is bound by residues 74-79, 108-112, 132-133, Lys144, Lys153, and 171-174; these read SGEAAK, GVVGD, TT, and FLRT. Zn(2+) contacts are provided by Glu186, His249, and His266.

Belongs to the sugar phosphate cyclases superfamily. Dehydroquinate synthase family. The cofactor is Co(2+). It depends on Zn(2+) as a cofactor. Requires NAD(+) as cofactor.

It localises to the cytoplasm. The enzyme catalyses 7-phospho-2-dehydro-3-deoxy-D-arabino-heptonate = 3-dehydroquinate + phosphate. It functions in the pathway metabolic intermediate biosynthesis; chorismate biosynthesis; chorismate from D-erythrose 4-phosphate and phosphoenolpyruvate: step 2/7. Functionally, catalyzes the conversion of 3-deoxy-D-arabino-heptulosonate 7-phosphate (DAHP) to dehydroquinate (DHQ). This is 3-dehydroquinate synthase from Geobacillus thermodenitrificans (strain NG80-2).